Consider the following 467-residue polypeptide: Glycogen synthase (467 aa).

ADP-alpha-D-glucose is bound at residue Lys15.

Belongs to the glycosyltransferase 1 family. Bacterial/plant glycogen synthase subfamily.

The enzyme catalyses [(1-&gt;4)-alpha-D-glucosyl](n) + ADP-alpha-D-glucose = [(1-&gt;4)-alpha-D-glucosyl](n+1) + ADP + H(+). Its pathway is glycan biosynthesis; glycogen biosynthesis. In terms of biological role, synthesizes alpha-1,4-glucan chains using ADP-glucose. This is Glycogen synthase from Desulfitobacterium hafniense (strain DSM 10664 / DCB-2).